A 404-amino-acid polypeptide reads, in one-letter code: Coenzyme F(430) synthetase (404 aa).

112 to 117 (GVKGKT) lines the ATP pocket.

The protein belongs to the MurCDEF family.

The enzyme catalyses 15,17(3)-seco-F430-17(3)-acid + ATP = coenzyme F430 + ADP + phosphate. Involved in the biosynthesis of the unique nickel-containing tetrapyrrole coenzyme F430, the prosthetic group of methyl-coenzyme M reductase (MCR), which plays a key role in methanogenesis and anaerobic methane oxidation. Catalyzes the activation the g-propionate side chain of 15,17(3)-seco-F430-17(3)-acid (seco-F430) for intramolecular C-C bond formation to yield the carbocyclic F ring of coenzyme F430. The sequence is that of Coenzyme F(430) synthetase from Methanocaldococcus jannaschii (strain ATCC 43067 / DSM 2661 / JAL-1 / JCM 10045 / NBRC 100440) (Methanococcus jannaschii).